Here is a 37-residue protein sequence, read N- to C-terminus: MIEPILLGIVLGMVLVTLAGLFVAAYRQYQRGNKMGL.

A helical transmembrane segment spans residues 5 to 25 (ILLGIVLGMVLVTLAGLFVAA).

This sequence belongs to the PetG family. The 4 large subunits of the cytochrome b6-f complex are cytochrome b6, subunit IV (17 kDa polypeptide, PetD), cytochrome f and the Rieske protein, while the 4 small subunits are PetG, PetL, PetM and PetN. The complex functions as a dimer.

The protein localises to the cellular thylakoid membrane. In terms of biological role, component of the cytochrome b6-f complex, which mediates electron transfer between photosystem II (PSII) and photosystem I (PSI), cyclic electron flow around PSI, and state transitions. PetG is required for either the stability or assembly of the cytochrome b6-f complex. In Synechococcus sp. (strain JA-3-3Ab) (Cyanobacteria bacterium Yellowstone A-Prime), this protein is Cytochrome b6-f complex subunit 5.